A 410-amino-acid polypeptide reads, in one-letter code: MGSCSPQLPLICLSDQTLKPGSSKWVKVRSDVRKALEDYGCFEAKIDQVSMELQGSVLKAMQELFALPTEAKQRNVCPKPFAGYFSHNGLSESFGIKDANILEKAHEFTQQLWPEGNKSIKMIQLYAEKLAELDMMVRRLILESYGIEYFIDEHLNSTYYRMRLMKYIARPDNDITAAVGANVDNGANDNADGDANVNDDGASIGVKVNVDVGDDVNDNDSVNIGVGVDINVETNVNGDLDAEANGDATAWVVGAVSGNASVGAKEANVDAELGLPSHTDKSLSGIIYQHQIDGLEVKTKEGKWIRVKPAPNTVIVIAGDALCALMNGRIPSPYHRVRVTERKKTRYAAALFSYPKEGYIIDSPKELVDEKHPRAFKPFDFVDLFNFYHTEAGRRAPSTLQAFCGVSAGK.

The 98-residue stretch at 258–355 (GNASVGAKEA…RYAAALFSYP (98 aa)) folds into the Fe2OG dioxygenase domain. Residues His-278, Asp-280, and His-335 each contribute to the Fe cation site. Arg-346 provides a ligand contact to 2-oxoglutarate.

Belongs to the iron/ascorbate-dependent oxidoreductase family. It depends on Fe(2+) as a cofactor.

Functionally, 2-oxoglutarate-dependent dioxygenase involved in glucosinolates biosynthesis. Catalyzes the conversion of methylsulfinylalkyl glucosinolates to hydroxyalkyl glucosinolates. The protein is 2-oxoglutarate-dependent dioxygenase AOP3 (AOP3) of Arabidopsis thaliana (Mouse-ear cress).